The chain runs to 415 residues: 2-oxoadipate dioxygenase/decarboxylase (415 aa).

2-oxoadipate is bound by residues H66, R70, and H225. A Fe(2+)-binding site is contributed by H66. Residues H225 and E296 each coordinate Fe(2+). 2-oxoadipate is bound at residue A361.

It belongs to the 2-oxoadipate dioxygenase/decarboxylase family. The cofactor is Fe(2+).

It carries out the reaction 2-oxoadipate + O2 = (R)-2-hydroxyglutarate + CO2. Catalyzes the decarboxylation and hydroxylation of 2-oxoadipate (2OA) to form D-2-hydroxyglutarate (D-2-HGA). The sequence is that of 2-oxoadipate dioxygenase/decarboxylase from Mycobacterium bovis (strain ATCC BAA-935 / AF2122/97).